Reading from the N-terminus, the 90-residue chain is Acyl-CoA-binding protein homolog (90 aa).

The 87-residue stretch at Leu-3–Leu-89 folds into the ACB domain. An acyl-CoA contacts are provided by residues Arg-15, Tyr-30–Lys-34, Lys-53, Lys-57, and Tyr-76.

This sequence belongs to the ACBP family.

Binds medium- and long-chain acyl-CoA esters with very high affinity and may function as an intracellular carrier of acyl-CoA esters. The sequence is that of Acyl-CoA-binding protein homolog from Manduca sexta (Tobacco hawkmoth).